Here is a 273-residue protein sequence, read N- to C-terminus: 4-hydroxy-tetrahydrodipicolinate reductase (273 aa).

NAD(+) is bound at residue 12 to 17 (GAAGRM). An NADP(+)-binding site is contributed by Arg39. NAD(+) is bound by residues 102–104 (GTT) and 126–129 (AANF). The active-site Proton donor/acceptor is His159. Residue His160 coordinates (S)-2,3,4,5-tetrahydrodipicolinate. Lys163 (proton donor) is an active-site residue. 169-170 (GT) serves as a coordination point for (S)-2,3,4,5-tetrahydrodipicolinate.

This sequence belongs to the DapB family. As to quaternary structure, homotetramer.

It localises to the cytoplasm. The enzyme catalyses (S)-2,3,4,5-tetrahydrodipicolinate + NAD(+) + H2O = (2S,4S)-4-hydroxy-2,3,4,5-tetrahydrodipicolinate + NADH + H(+). It carries out the reaction (S)-2,3,4,5-tetrahydrodipicolinate + NADP(+) + H2O = (2S,4S)-4-hydroxy-2,3,4,5-tetrahydrodipicolinate + NADPH + H(+). Its pathway is amino-acid biosynthesis; L-lysine biosynthesis via DAP pathway; (S)-tetrahydrodipicolinate from L-aspartate: step 4/4. Catalyzes the conversion of 4-hydroxy-tetrahydrodipicolinate (HTPA) to tetrahydrodipicolinate. In Erwinia tasmaniensis (strain DSM 17950 / CFBP 7177 / CIP 109463 / NCPPB 4357 / Et1/99), this protein is 4-hydroxy-tetrahydrodipicolinate reductase.